The following is a 231-amino-acid chain: Large ribosomal subunit protein uL3 (231 aa).

Position 151 is an N5-methylglutamine (Q151).

Belongs to the universal ribosomal protein uL3 family. Part of the 50S ribosomal subunit. Forms a cluster with proteins L14 and L19. In terms of processing, methylated by PrmB.

Functionally, one of the primary rRNA binding proteins, it binds directly near the 3'-end of the 23S rRNA, where it nucleates assembly of the 50S subunit. The chain is Large ribosomal subunit protein uL3 from Granulibacter bethesdensis (strain ATCC BAA-1260 / CGDNIH1).